The sequence spans 865 residues: Alanine--tRNA ligase (865 aa).

Zn(2+) contacts are provided by histidine 552, histidine 556, cysteine 654, and histidine 658.

Belongs to the class-II aminoacyl-tRNA synthetase family. Requires Zn(2+) as cofactor.

The protein localises to the cytoplasm. It catalyses the reaction tRNA(Ala) + L-alanine + ATP = L-alanyl-tRNA(Ala) + AMP + diphosphate. In terms of biological role, catalyzes the attachment of alanine to tRNA(Ala) in a two-step reaction: alanine is first activated by ATP to form Ala-AMP and then transferred to the acceptor end of tRNA(Ala). Also edits incorrectly charged Ser-tRNA(Ala) and Gly-tRNA(Ala) via its editing domain. In Coxiella burnetii (strain RSA 331 / Henzerling II), this protein is Alanine--tRNA ligase.